We begin with the raw amino-acid sequence, 107 residues long: Large ribosomal subunit protein eL33B (107 aa).

Residue A2 is modified to N-acetylalanine; partial. A Glycyl lysine isopeptide (Lys-Gly) (interchain with G-Cter in ubiquitin) cross-link involves residue K47.

The protein belongs to the eukaryotic ribosomal protein eL33 family. In terms of assembly, component of the large ribosomal subunit (LSU). Mature yeast ribosomes consist of a small (40S) and a large (60S) subunit. The 40S small subunit contains 1 molecule of ribosomal RNA (18S rRNA) and 33 different proteins (encoded by 57 genes). The large 60S subunit contains 3 rRNA molecules (25S, 5.8S and 5S rRNA) and 46 different proteins (encoded by 81 genes). In terms of processing, N-terminally acetylated by acetyltransferase NatA.

The protein localises to the cytoplasm. In terms of biological role, component of the ribosome, a large ribonucleoprotein complex responsible for the synthesis of proteins in the cell. The small ribosomal subunit (SSU) binds messenger RNAs (mRNAs) and translates the encoded message by selecting cognate aminoacyl-transfer RNA (tRNA) molecules. The large subunit (LSU) contains the ribosomal catalytic site termed the peptidyl transferase center (PTC), which catalyzes the formation of peptide bonds, thereby polymerizing the amino acids delivered by tRNAs into a polypeptide chain. The nascent polypeptides leave the ribosome through a tunnel in the LSU and interact with protein factors that function in enzymatic processing, targeting, and the membrane insertion of nascent chains at the exit of the ribosomal tunnel. The sequence is that of Large ribosomal subunit protein eL33B from Saccharomyces cerevisiae (strain ATCC 204508 / S288c) (Baker's yeast).